Here is a 512-residue protein sequence, read N- to C-terminus: Maturase K (512 aa).

It belongs to the intron maturase 2 family. MatK subfamily.

The protein localises to the plastid. The protein resides in the chloroplast. Usually encoded in the trnK tRNA gene intron. Probably assists in splicing its own and other chloroplast group II introns. This is Maturase K from Daucus carota (Wild carrot).